The chain runs to 249 residues: Methionine aminopeptidase 2 (249 aa).

His76 contacts substrate. A divalent metal cation contacts are provided by Asp94, Asp105, and His168. Substrate is bound at residue His175. 2 residues coordinate a divalent metal cation: Glu202 and Glu233.

In terms of assembly, monomer. Co(2+) is required as a cofactor. The cofactor is Zn(2+). Requires Mn(2+) as cofactor. It depends on Fe(2+) as a cofactor.

Its subcellular location is the cytoplasm. The catalysed reaction is Release of N-terminal amino acids, preferentially methionine, from peptides and arylamides.. In terms of biological role, removes the N-terminal methionine from nascent proteins. The N-terminal methionine is often cleaved when the second residue in the primary sequence is small and uncharged (Met-Ala-, Cys, Gly, Pro, Ser, Thr, or Val). Requires deformylation of the N(alpha)-formylated initiator methionine before it can be hydrolyzed. The polypeptide is Methionine aminopeptidase 2 (Bacillus subtilis (strain 168)).